Reading from the N-terminus, the 647-residue chain is Dihydrolipoyllysine-residue acetyltransferase component of pyruvate dehydrogenase complex (647 aa).

The N-terminal 86 residues, 1–86 (MWRVCARRAQ…LWGSPSRRWY (86 aa)), are a transit peptide targeting the mitochondrion. In terms of domain architecture, Lipoyl-binding 1 spans 91–167 (HQKVPLPSLS…PVGAIICITV (77 aa)). The residue at position 100 (Ser-100) is a Phosphoserine. Residue Lys-132 is modified to N6-lipoyllysine. Residues 184–216 (SAAPAPPAAPAPTPAAPAPSPTPSAQAPGSSYP) are disordered. Pro residues predominate over residues 187–205 (PAPPAAPAPTPAAPAPSPT). A Lipoyl-binding 2 domain is found at 218-294 (HMQVLLPALS…PLGTPLCIIV (77 aa)). Position 259 is an N6-lipoyllysine (Lys-259). Residues 311–352 (VTDLKPPAPPPIPSPAAPVPPAPQPVAPPPSAPRPAAPAGPK) are disordered. Over residues 316-348 (PPAPPPIPSPAAPVPPAPQPVAPPPSAPRPAAP) the composition is skewed to pro residues. The region spanning 356–393 (FVSPLAKKLAAEKGIDLTQVKGTGPDGRIIKKDIDSFV) is the Peripheral subunit-binding (PSBD) domain. Residue Arg-461 participates in CoA binding. Lys-466 is subject to N6-acetyllysine. Lys-473 is subject to N6-succinyllysine. Ser-475 is a CoA binding site. The residue at position 547 (Lys-547) is an N6-succinyllysine. CoA is bound by residues Ser-566, Asn-567, and Gly-591. Active-site residues include His-620 and Asp-624.

This sequence belongs to the 2-oxoacid dehydrogenase family. As to quaternary structure, part of the pyruvate dehydrogenase complex (PDHc) that is a multi-enzyme complex composed of multiple copies of three enzymes, pyruvate dehydrogenase (subunits PDH1A and PDHB, E1 component), dihydrolipoamide acetyltransferase (DLAT, E2 component), and dihydrolipoamide dehydrogenase (DLD, E3 component) to which is added an additional protein the E3-binding protein (PDHX, E3BP). In terms of structural architecture, the E2 and E3BP components assemble into a 60meric central core with icosahedral symmetry. The central core is decorated with E1 and E3 proteins. Currently, two alternative models for the E2:E3BP stoichiometry are considered as being either 48:12 (E2(48)-E3BP(12)) or 40:20 (E2(40)-E3BP(20)). Interacts with PDK2 and PDK3. Interacts with SIRT4. Interacts with PDHB. The cofactor is (R)-lipoate. Post-translationally, delipoylated at Lys-132 and Lys-259 by SIRT4, delipoylation decreases the PHD complex activity.

The protein localises to the mitochondrion matrix. The enzyme catalyses N(6)-[(R)-dihydrolipoyl]-L-lysyl-[protein] + acetyl-CoA = N(6)-[(R)-S(8)-acetyldihydrolipoyl]-L-lysyl-[protein] + CoA. Its function is as follows. As part of the pyruvate dehydrogenase complex, catalyzes the transfers of an acetyl group to a lipoic acid moiety. The pyruvate dehydrogenase complex, catalyzes the overall conversion of pyruvate to acetyl-CoA and CO(2), and thereby links cytoplasmic glycolysis and the mitochondrial tricarboxylic acid (TCA) cycle. The chain is Dihydrolipoyllysine-residue acetyltransferase component of pyruvate dehydrogenase complex from Bos taurus (Bovine).